A 107-amino-acid polypeptide reads, in one-letter code: U-scoloptoxin(18)-Er1a (107 aa).

The signal sequence occupies residues 1-21 (MQRFLCLVACSVVLLVLGIVA).

Belongs to the scoloptoxin-18 family. Contains 5 disulfide bonds. As to expression, expressed by the venom gland.

Its subcellular location is the secreted. The protein is U-scoloptoxin(18)-Er1a of Ethmostigmus rubripes (Giant centipede).